The sequence spans 99 residues: Ragulator complex protein LAMTOR4 (99 aa).

N-acetylmethionine is present on Met1. At Thr2 the chain carries N-acetylthreonine; in Ragulator complex protein LAMTOR4, N-terminally processed. The residue at position 67 (Ser67) is a Phosphoserine.

Belongs to the LAMTOR4 family. As to quaternary structure, part of the Ragulator complex composed of LAMTOR1, LAMTOR2, LAMTOR3, LAMTOR4 and LAMTOR5. LAMTOR4 and LAMTOR5 form a heterodimer that interacts, through LAMTOR1, with a LAMTOR2, LAMTOR3 heterodimer. The Ragulator complex interacts with both the mTORC1 complex and heterodimers constituted of the Rag GTPases RagA/RRAGA, RagB/RRAGB, RagC/RRAGC and RagD/RRAGD; regulated by amino acid availability. The Ragulator complex interacts with SLC38A9; the probable amino acid sensor. Component of the lysosomal folliculin complex (LFC), composed of FLCN, FNIP1 (or FNIP2), RagA/RRAGA or RagB/RRAGB GDP-bound, RagC/RRAGC or RagD/RRAGD GTP-bound, and Ragulator. Post-translationally, phosphorylation at Ser-67 by PKA inhibits Ragulator complex assembly.

Its subcellular location is the lysosome. In terms of biological role, as part of the Ragulator complex it is involved in amino acid sensing and activation of mTORC1, a signaling complex promoting cell growth in response to growth factors, energy levels, and amino acids. Activated by amino acids through a mechanism involving the lysosomal V-ATPase, the Ragulator plays a dual role for the small GTPases Rag (RagA/RRAGA, RagB/RRAGB, RagC/RRAGC and/or RagD/RRAGD): it (1) acts as a guanine nucleotide exchange factor (GEF), activating the small GTPases Rag and (2) mediates recruitment of Rag GTPases to the lysosome membrane. Activated Ragulator and Rag GTPases function as a scaffold recruiting mTORC1 to lysosomes where it is in turn activated. In Bos taurus (Bovine), this protein is Ragulator complex protein LAMTOR4 (LAMTOR4).